The following is a 501-amino-acid chain: Glutamyl-tRNA(Gln) amidotransferase subunit A (501 aa).

Catalysis depends on charge relay system residues Lys80 and Ser155. The Acyl-ester intermediate role is filled by Ser179.

This sequence belongs to the amidase family. GatA subfamily. As to quaternary structure, heterotrimer of A, B and C subunits.

It carries out the reaction L-glutamyl-tRNA(Gln) + L-glutamine + ATP + H2O = L-glutaminyl-tRNA(Gln) + L-glutamate + ADP + phosphate + H(+). Its function is as follows. Allows the formation of correctly charged Gln-tRNA(Gln) through the transamidation of misacylated Glu-tRNA(Gln) in organisms which lack glutaminyl-tRNA synthetase. The reaction takes place in the presence of glutamine and ATP through an activated gamma-phospho-Glu-tRNA(Gln). This chain is Glutamyl-tRNA(Gln) amidotransferase subunit A, found in Cupriavidus necator (strain ATCC 17699 / DSM 428 / KCTC 22496 / NCIMB 10442 / H16 / Stanier 337) (Ralstonia eutropha).